Consider the following 334-residue polypeptide: Ornithine carbamoyltransferase (334 aa).

Carbamoyl phosphate is bound by residues serine 57–threonine 60, glutamine 84, arginine 108, and histidine 135–glutamine 138. L-ornithine-binding positions include asparagine 169, aspartate 233, and serine 237 to methionine 238. Residues cysteine 275–leucine 276 and arginine 320 contribute to the carbamoyl phosphate site.

This sequence belongs to the aspartate/ornithine carbamoyltransferase superfamily. OTCase family.

Its subcellular location is the cytoplasm. It catalyses the reaction carbamoyl phosphate + L-ornithine = L-citrulline + phosphate + H(+). It functions in the pathway amino-acid biosynthesis; L-arginine biosynthesis; L-arginine from L-ornithine and carbamoyl phosphate: step 1/3. Its function is as follows. Reversibly catalyzes the transfer of the carbamoyl group from carbamoyl phosphate (CP) to the N(epsilon) atom of ornithine (ORN) to produce L-citrulline. This Vibrio parahaemolyticus serotype O3:K6 (strain RIMD 2210633) protein is Ornithine carbamoyltransferase.